Here is a 670-residue protein sequence, read N- to C-terminus: Nitrate import ATP-binding protein NrtC (670 aa).

An ABC transporter domain is found at 5-239; that stretch reads IEIDHVDRIF…RPRHRLEVVN (235 aa). 42–49 provides a ligand contact to ATP; it reads GHSGCGKS. Residues 255–278 form a linker region; the sequence is NQQKRAKKVGAVSQFAEAMGGNGL. The segment at 279-670 is nrtA-like; sequence EKINLDLGFI…LIDQIDQVNQ (392 aa).

It belongs to the ABC transporter superfamily. Nitrate/nitrite/cyanate uptake transporter (NitT) (TC 3.A.1.16) family. The complex is composed of two ATP-binding proteins (NrtC and NrtD), two transmembrane proteins (NrtB) and a solute-binding protein (NrtA).

The protein resides in the cell inner membrane. It carries out the reaction nitrate(out) + ATP + H2O = nitrate(in) + ADP + phosphate + H(+). Functionally, part of the ABC transporter complex NrtABCD involved in nitrate uptake. The complex is probably also involved in nitrite transport. Probably responsible for energy coupling to the transport system. The polypeptide is Nitrate import ATP-binding protein NrtC (nrtC) (Synechocystis sp. (strain ATCC 27184 / PCC 6803 / Kazusa)).